The sequence spans 865 residues: Prominin-1 (865 aa).

An N-terminal signal peptide occupies residues methionine 1–serine 19. The Extracellular segment spans residues glycine 20 to glycine 108. The helical transmembrane segment at isoleucine 109–phenylalanine 129 threads the bilayer. Residues phenylalanine 130–cysteine 157 are Cytoplasmic-facing. The helical transmembrane segment at phenylalanine 158–valine 178 threads the bilayer. Topologically, residues alanine 179–tyrosine 433 are extracellular. An N-linked (GlcNAc...) asparagine glycan is attached at asparagine 220. An N6-acetyllysine mark is found at lysine 225, lysine 257, and lysine 264. Residues asparagine 274, asparagine 395, and asparagine 414 are each glycosylated (N-linked (GlcNAc...) asparagine). The chain crosses the membrane as a helical span at residues tryptophan 434–leucine 454. Residues glycine 455 to glycine 486 are Cytoplasmic-facing. Residues valine 487 to phenylalanine 507 form a helical membrane-spanning segment. Over glycine 508–asparagine 792 the chain is Extracellular. Residues asparagine 548, asparagine 580, asparagine 729, and asparagine 730 are each glycosylated (N-linked (GlcNAc...) asparagine). Residues leucine 793–valine 813 form a helical membrane-spanning segment. The Cytoplasmic portion of the chain corresponds to lysine 814–histidine 865. Serine 863 carries the phosphoserine modification.

It belongs to the prominin family. In terms of assembly, interacts with CDHR1 and with actin filaments. Interacts with NAT8 and NAT8B. In terms of processing, isoform 1 and isoform 2 are glycosylated. Post-translationally, acetylation at Lys-225, Lys-257 and Lys-264 by NAT8 and NAT8B may control PROM1 protein expression and its function in cell apoptosis. Isoform 1 is selectively expressed on CD34 hematopoietic stem and progenitor cells in adult and fetal bone marrow, fetal liver, cord blood and adult peripheral blood. Isoform 1 is not detected on other blood cells. Isoform 1 is also expressed in a number of non-lymphoid tissues including retina, pancreas, placenta, kidney, liver, lung, brain and heart. Found in saliva within small membrane particles. Isoform 2 is predominantly expressed in fetal liver, skeletal muscle, kidney, and heart as well as adult pancreas, kidney, liver, lung, and placenta. Isoform 2 is highly expressed in fetal liver, low in bone marrow, and barely detectable in peripheral blood. Isoform 2 is expressed on hematopoietic stem cells and in epidermal basal cells (at protein level). Expressed in adult retina by rod and cone photoreceptor cells (at protein level).

It is found in the apical cell membrane. The protein localises to the cell projection. It localises to the microvillus membrane. Its subcellular location is the cilium. The protein resides in the photoreceptor outer segment. It is found in the endoplasmic reticulum. The protein localises to the endoplasmic reticulum-Golgi intermediate compartment. May play a role in cell differentiation, proliferation and apoptosis. Binds cholesterol in cholesterol-containing plasma membrane microdomains and may play a role in the organization of the apical plasma membrane in epithelial cells. During early retinal development acts as a key regulator of disk morphogenesis. Involved in regulation of MAPK and Akt signaling pathways. In neuroblastoma cells suppresses cell differentiation such as neurite outgrowth in a RET-dependent manner. In Homo sapiens (Human), this protein is Prominin-1 (PROM1).